We begin with the raw amino-acid sequence, 649 residues long: DNA mismatch repair protein MutL (649 aa).

Belongs to the DNA mismatch repair MutL/HexB family.

In terms of biological role, this protein is involved in the repair of mismatches in DNA. It is required for dam-dependent methyl-directed DNA mismatch repair. May act as a 'molecular matchmaker', a protein that promotes the formation of a stable complex between two or more DNA-binding proteins in an ATP-dependent manner without itself being part of a final effector complex. The polypeptide is DNA mismatch repair protein MutL (Streptococcus pneumoniae serotype 19F (strain G54)).